The following is a 629-amino-acid chain: EF-hand calcium-binding domain-containing protein 7 (629 aa).

Residues 1–25 (MAISPRSDATFSSQKSTPSESPRTK) form a disordered region. The segment covering 7–21 (SDATFSSQKSTPSES) has biased composition (polar residues). EF-hand domains lie at 102–137 (TSKA…RGEK) and 138–173 (MTRE…TNEQ). The tract at residues 195-229 (NHIEGSPERDPSPVPKPSPKITRKTDPETFLNKGD) is disordered. Ser200 and Ser212 each carry phosphoserine. An EF-hand 3 domain is found at 403–438 (EFKSTLSDIFEVIDLDGNGLLSLEEYNFFELRTSGE). Ca(2+) is bound by residues Asp416, Asp418, Asn420, and Glu427.

In terms of assembly, component of the EvC complex composed of EFCAB7, IQCE, EVC2 and EVC; built from two subcomplexes, EVC2:EVC and EFCAB7:IQCE. Interacts (via EF-hand 1 and 2) with IQCE (via N-terminus); this interaction anchors the EVC-EVC2 complex in a signaling microdomain at the base of cilia and stimulates the Hedgehog (Hh) pathway. Interacts with EVC2 (via N-terminal end). Interacts with EVC.

It localises to the cell projection. The protein resides in the cilium membrane. Its function is as follows. Component of the EvC complex that positively regulates ciliary Hedgehog (Hh) signaling. Required for the localization of the EVC2:EVC subcomplex at the base of primary cilia. This is EF-hand calcium-binding domain-containing protein 7 (EFCAB7) from Homo sapiens (Human).